Here is an 858-residue protein sequence, read N- to C-terminus: Protein translocase subunit SecA (858 aa).

ATP is bound by residues Gln-85, 103-107 (GEGKT), and Asp-511. The Zn(2+) site is built by Cys-840, Cys-842, Cys-851, and Cys-852.

This sequence belongs to the SecA family. Monomer and homodimer. Part of the essential Sec protein translocation apparatus which comprises SecA, SecYEG and auxiliary proteins SecDF. Other proteins may also be involved. It depends on Zn(2+) as a cofactor.

Its subcellular location is the cell membrane. The protein resides in the cytoplasm. The catalysed reaction is ATP + H2O + cellular proteinSide 1 = ADP + phosphate + cellular proteinSide 2.. Its function is as follows. Part of the Sec protein translocase complex. Interacts with the SecYEG preprotein conducting channel. Has a central role in coupling the hydrolysis of ATP to the transfer of proteins into and across the cell membrane, serving as an ATP-driven molecular motor driving the stepwise translocation of polypeptide chains across the membrane. This chain is Protein translocase subunit SecA, found in Lachnoclostridium phytofermentans (strain ATCC 700394 / DSM 18823 / ISDg) (Clostridium phytofermentans).